The sequence spans 448 residues: Divalent metal cation transporter MntH (448 aa).

Residues 1 to 10 (MKKDKTERTK) are compositionally biased toward basic and acidic residues. The tract at residues 1–20 (MKKDKTERTKQSWRKAQNAP) is disordered. A run of 11 helical transmembrane segments spans residues 41–61 (LFAF…PGNW), 69–89 (SEFG…AVLL), 117–137 (GFVL…AEVI), 147–167 (FGIP…LVLF), 176–196 (IEVI…AEMV), 215–235 (IVTN…TVMP), 270–290 (FSLT…AAAF), 307–327 (LLNP…ALLA), 363–383 (VLAI…GINE), 384–404 (LLIF…IPLV), and 424–444 (IISW…LFYT).

This sequence belongs to the NRAMP family.

The protein localises to the cell membrane. Its function is as follows. H(+)-stimulated, divalent metal cation uptake system. The protein is Divalent metal cation transporter MntH of Listeria monocytogenes serotype 4b (strain CLIP80459).